We begin with the raw amino-acid sequence, 200 residues long: NAD(P)H dehydrogenase (quinone) (200 aa).

Positions 4 to 190 constitute a Flavodoxin-like domain; the sequence is VLVLYYSTYG…EGARFQGRHV (187 aa). FMN-binding positions include 10–15 and 78–80; these read STYGHV and TRY. Y12 contributes to the NAD(+) binding site. W98 contacts substrate. Residues 113-119 and H134 contribute to the FMN site; that span reads STASQHG.

This sequence belongs to the WrbA family. It depends on FMN as a cofactor.

The enzyme catalyses a quinone + NADH + H(+) = a quinol + NAD(+). It carries out the reaction a quinone + NADPH + H(+) = a quinol + NADP(+). The chain is NAD(P)H dehydrogenase (quinone) from Methylobacterium radiotolerans (strain ATCC 27329 / DSM 1819 / JCM 2831 / NBRC 15690 / NCIMB 10815 / 0-1).